Consider the following 780-residue polypeptide: Tripartite terminase subunit 1 (780 aa).

Disordered stretches follow at residues 41 to 66 (RGNA…AGPG), 428 to 447 (GAGA…GDRV), and 452 to 483 (GARG…WGDI). Residues 52 to 63 (ASGAGAAASSEA) are compositionally biased toward low complexity. Gly residues predominate over residues 429 to 439 (AGAGGPKGGAG). 691–698 (FASVYRCG) contacts ATP.

This sequence belongs to the herpesviridae TRM1 protein family. Associates with TRM2 and TRM3 to form the tripartite terminase complex. Interacts with portal protein.

It localises to the host nucleus. In terms of biological role, component of the molecular motor that translocates viral genomic DNA in empty capsid during DNA packaging. Forms a tripartite terminase complex together with TRM2 and TRM3 in the host cytoplasm. Once the complex reaches the host nucleus, it interacts with the capsid portal vertex. This portal forms a ring in which genomic DNA is translocated into the capsid. TRM1 carries an endonuclease activity that plays an important role for the cleavage of concatemeric viral DNA into unit length genomes. This Homo sapiens (Human) protein is Tripartite terminase subunit 1.